The following is a 332-amino-acid chain: MKFLDQAKIYVRSGDGGNGVVAFRREKYIEFGGPDGGNGGRGGDIVFEAVENLNTLIDFRYTQHFRARKGGNGAGSDRTGAAAPPVVIKVPVGTQILDDDRETLLADLDAPGKRIVLLRGGDGGHGNAMFKTSTNRAPRRADPGWPGEERWVWLRLKLIADAGLVGLPNAGKSTFLSVASAARPKIADYPFTTLHPQLGVVRLSMTEEFVLADIPGLIEGAHDGAGLGDRFLGHVERCAALIHLIDGAAGDVVDAWRTIRGELEAYGGGLADKPELIVLNKMDAMTPHQIAGRRSALERASGCKVMVISAAAHQGVDAVLRETLRMIREQRQ.

Residues 1-159 (MKFLDQAKIY…RWVWLRLKLI (159 aa)) form the Obg domain. The region spanning 160–328 (ADAGLVGLPN…VLRETLRMIR (169 aa)) is the OBG-type G domain. Residues 166–173 (GLPNAGKS), 191–195 (FTTLH), 213–216 (DIPG), 280–283 (NKMD), and 309–311 (SAA) each bind GTP. Residues Ser-173 and Thr-193 each contribute to the Mg(2+) site.

Belongs to the TRAFAC class OBG-HflX-like GTPase superfamily. OBG GTPase family. As to quaternary structure, monomer. Requires Mg(2+) as cofactor.

It localises to the cytoplasm. An essential GTPase which binds GTP, GDP and possibly (p)ppGpp with moderate affinity, with high nucleotide exchange rates and a fairly low GTP hydrolysis rate. Plays a role in control of the cell cycle, stress response, ribosome biogenesis and in those bacteria that undergo differentiation, in morphogenesis control. In Acidiphilium cryptum (strain JF-5), this protein is GTPase Obg.